The chain runs to 257 residues: 3-alpha-hydroxysteroid dehydrogenase/carbonyl reductase (257 aa).

Residues 8-13 (GCATGI), Asp-32, 41-42 (DL), and Gly-71 contribute to the NAD(+) site. A substrate-binding site is contributed by Ser-114. NAD(+)-binding residues include Tyr-155 and Lys-159. Residue Tyr-155 is the Proton acceptor of the active site.

It belongs to the short-chain dehydrogenases/reductases (SDR) family. Homodimer.

Its subcellular location is the cytoplasm. The catalysed reaction is a 3alpha-hydroxysteroid + NADP(+) = a 3-oxosteroid + NADPH + H(+). It catalyses the reaction a 3alpha-hydroxysteroid + NAD(+) = a 3-oxosteroid + NADH + H(+). In terms of biological role, catalyzes the reversible interconversion of hydroxy and oxo groups at position 3 of the steroid nucleus. Along with the 3 alpha-hydroxysteroid dehydrogenase and 3-oxo-reductase activities towards a variety of cis or trans fused A/B ring steroids, it also reduces several xenobiotic carbonyl compounds, including a metyrapone-based class of insecticides, to the respective alcohol metabolites. No detectable activity on testosterone, progesterone or 3-oxo-desogestrel. The polypeptide is 3-alpha-hydroxysteroid dehydrogenase/carbonyl reductase (hsdA) (Comamonas testosteroni (Pseudomonas testosteroni)).